Consider the following 846-residue polypeptide: Translation initiation factor IF-2 (846 aa).

Residues 345-512 (SRAPVVTIMG…AVLLQSEVLE (168 aa)) enclose the tr-type G domain. The tract at residues 354 to 361 (GHVDHGKT) is G1. 354 to 361 (GHVDHGKT) is a GTP binding site. Residues 379-383 (GITQH) are G2. The interval 400-403 (DTPG) is G3. Residues 400-404 (DTPGH) and 454-457 (NKID) contribute to the GTP site. The G4 stretch occupies residues 454–457 (NKID). Positions 490–492 (SAK) are G5.

Belongs to the TRAFAC class translation factor GTPase superfamily. Classic translation factor GTPase family. IF-2 subfamily.

The protein localises to the cytoplasm. One of the essential components for the initiation of protein synthesis. Protects formylmethionyl-tRNA from spontaneous hydrolysis and promotes its binding to the 30S ribosomal subunits. Also involved in the hydrolysis of GTP during the formation of the 70S ribosomal complex. This chain is Translation initiation factor IF-2, found in Francisella tularensis subsp. holarctica (strain FTNF002-00 / FTA).